A 98-amino-acid polypeptide reads, in one-letter code: Prostate and testis expressed protein 3 (98 aa).

An N-terminal signal peptide occupies residues 1 to 20; the sequence is MNKHFLLLFSLFYFIVEATS. A UPAR/Ly6 domain is found at 21-97; it reads LKCVTCHLRT…CCNSDFCNFR (77 aa). Disulfide bonds link Cys23-Cys50, Cys26-Cys35, Cys42-Cys68, and Cys72-Cys88.

Belongs to the PATE family.

It localises to the secreted. In Mus musculus (Mouse), this protein is Prostate and testis expressed protein 3 (Pate3).